Consider the following 323-residue polypeptide: Dehydrogenase/reductase SDR family member 7B (323 aa).

The Cytoplasmic portion of the chain corresponds to 1–17 (MISPSFRKGMLKERVMD). The helical; Signal-anchor for type II membrane protein transmembrane segment at 18-38 (LASQTTILPLLFGCLGIFSLF) threads the bilayer. The Lumenal segment spans residues 39-323 (RLLQRIRSKA…ARKERKSKSS (285 aa)). Positions 62 and 64 each coordinate NAD(+). Serine 192 is a binding site for substrate. The NAD(+) site is built by tyrosine 205, lysine 209, and threonine 240. Tyrosine 205 acts as the Proton acceptor in catalysis.

Belongs to the short-chain dehydrogenases/reductases (SDR) family.

It localises to the endoplasmic reticulum membrane. Its function is as follows. Putative oxidoreductase. This Mus musculus (Mouse) protein is Dehydrogenase/reductase SDR family member 7B.